A 275-amino-acid polypeptide reads, in one-letter code: Dermonecrotic toxin SpeSicTox-betaIIA2i (275 aa).

Residue His-5 is part of the active site. Positions 25 and 27 each coordinate Mg(2+). His-41 functions as the Nucleophile in the catalytic mechanism. 2 disulfide bridges follow: Cys-45–Cys-51 and Cys-47–Cys-190. Asp-85 lines the Mg(2+) pocket.

This sequence belongs to the arthropod phospholipase D family. Class II subfamily. It depends on Mg(2+) as a cofactor. As to expression, expressed by the venom gland.

It localises to the secreted. The enzyme catalyses an N-(acyl)-sphingosylphosphocholine = an N-(acyl)-sphingosyl-1,3-cyclic phosphate + choline. It catalyses the reaction an N-(acyl)-sphingosylphosphoethanolamine = an N-(acyl)-sphingosyl-1,3-cyclic phosphate + ethanolamine. It carries out the reaction a 1-acyl-sn-glycero-3-phosphocholine = a 1-acyl-sn-glycero-2,3-cyclic phosphate + choline. The catalysed reaction is a 1-acyl-sn-glycero-3-phosphoethanolamine = a 1-acyl-sn-glycero-2,3-cyclic phosphate + ethanolamine. Dermonecrotic toxins cleave the phosphodiester linkage between the phosphate and headgroup of certain phospholipids (sphingolipid and lysolipid substrates), forming an alcohol (often choline) and a cyclic phosphate. This toxin acts on sphingomyelin (SM). It may also act on ceramide phosphoethanolamine (CPE), lysophosphatidylcholine (LPC) and lysophosphatidylethanolamine (LPE), but not on lysophosphatidylserine (LPS), and lysophosphatidylglycerol (LPG). It acts by transphosphatidylation, releasing exclusively cyclic phosphate products as second products. Induces dermonecrosis, hemolysis, increased vascular permeability, edema, inflammatory response, and platelet aggregation. This chain is Dermonecrotic toxin SpeSicTox-betaIIA2i, found in Sicarius peruensis (Six-eyed sand spider).